A 784-amino-acid polypeptide reads, in one-letter code: Cell wall protein Lmo0130 (784 aa).

Positions 1–34 (MKVNKFFKKTTHVLLVAGLTIGLTAPFTGTTAQA) are cleaved as a signal peptide. Positions 690 to 761 (ATTPPDNGNG…NTSLPTTGDT (72 aa)) are disordered. The segment covering 697–729 (GNGGTDNGNGNGNNGGTDGNGGTNNGNGSGTNG) has biased composition (gly residues). Residues 730–759 (GTTTTEDPTTTTSNTSTTGTSSNTSLPTTG) show a composition bias toward low complexity. Residues 755–759 (LPTTG) carry the LPXTG sorting signal motif. Position 758 is a pentaglycyl murein peptidoglycan amidated threonine (Thr-758). The propeptide at 759–784 (GDTAGLATVFGVILTTTALYVLRKRS) is removed by sortase A.

The protein localises to the secreted. Its subcellular location is the cell wall. The protein is Cell wall protein Lmo0130 of Listeria monocytogenes serovar 1/2a (strain ATCC BAA-679 / EGD-e).